A 523-amino-acid polypeptide reads, in one-letter code: REST corepressor 2 (523 aa).

The interval 1-43 (MPSVMEKPSAGSGILSRSRAKTAPNGGQPHSEDDSSEEEHSHD) is disordered. The span at 30 to 43 (HSEDDSSEEEHSHD) shows a compositional bias: basic and acidic residues. Phosphoserine occurs at positions 31, 35, 36, and 63. The ELM2 domain maps to 44 to 129 (SMIRVGTNYQ…KSLADLANFT (86 aa)). K88 participates in a covalent cross-link: Glycyl lysine isopeptide (Lys-Gly) (interchain with G-Cter in SUMO2). Residues 130–181 (PFPDEWTVEDKVLFEQAFGFHGKCFQRIQQMLPDKLIPSLVKYYYSWKKTRS) enclose the SANT 1 domain. The tract at residues 185–265 (VMDRQARRLG…RRRPPKGMYL (81 aa)) is disordered. S202 is modified (phosphoserine). Basic residues predominate over residues 248 to 260 (YRHHPLRTRRRPP). A coiled-coil region spans residues 283-314 (TLRGLDSQLISLKRQVQSMKQTNSSLRQALEG). The SANT 2 domain maps to 327–378 (KFNSRWTTDEQLLAVQAIRRYGKDFGAIAEVIGNKTLTQVKTFFVSYRRRFN). Positions 387-523 (EAEQDGAPTA…AQLEPPAPSL (137 aa)) are disordered. The span at 432–459 (SVPPAPPPPPPPTSLSQPPPLLRPPLPT) shows a compositional bias: pro residues. The segment covering 460–482 (APTLLRQPPPLQQGRFLQPRLAP) has biased composition (low complexity). Asymmetric dimethylarginine is present on R479.

The protein belongs to the CoREST family.

It localises to the nucleus. May act as a component of a corepressor complex that represses transcription. The polypeptide is REST corepressor 2 (Rcor2) (Rattus norvegicus (Rat)).